The sequence spans 279 residues: Small ribosomal subunit protein uS2 (279 aa).

Positions 255 to 279 (LLAGATTAAPEAAAGEAAAAPEQSS) are disordered.

This sequence belongs to the universal ribosomal protein uS2 family.

The protein is Small ribosomal subunit protein uS2 of Mycolicibacterium gilvum (strain PYR-GCK) (Mycobacterium gilvum (strain PYR-GCK)).